Consider the following 636-residue polypeptide: 1-deoxy-D-xylulose-5-phosphate synthase (636 aa).

Residues His74 and 115 to 117 (GHA) each bind thiamine diphosphate. Mg(2+) is bound at residue Asp146. Thiamine diphosphate is bound by residues 147 to 148 (GA), Asn175, Tyr285, and Glu368. Residue Asn175 participates in Mg(2+) binding.

It belongs to the transketolase family. DXPS subfamily. Homodimer. The cofactor is Mg(2+). It depends on thiamine diphosphate as a cofactor.

The enzyme catalyses D-glyceraldehyde 3-phosphate + pyruvate + H(+) = 1-deoxy-D-xylulose 5-phosphate + CO2. Its pathway is metabolic intermediate biosynthesis; 1-deoxy-D-xylulose 5-phosphate biosynthesis; 1-deoxy-D-xylulose 5-phosphate from D-glyceraldehyde 3-phosphate and pyruvate: step 1/1. Catalyzes the acyloin condensation reaction between C atoms 2 and 3 of pyruvate and glyceraldehyde 3-phosphate to yield 1-deoxy-D-xylulose-5-phosphate (DXP). This Anaeromyxobacter sp. (strain K) protein is 1-deoxy-D-xylulose-5-phosphate synthase.